Here is a 577-residue protein sequence, read N- to C-terminus: Sulfite reductase [NADPH] hemoprotein beta-component (577 aa).

Residues Cys-441, Cys-447, Cys-486, and Cys-490 each contribute to the [4Fe-4S] cluster site. Cys-490 contacts siroheme.

This sequence belongs to the nitrite and sulfite reductase 4Fe-4S domain family. In terms of assembly, alpha(8)-beta(8). The alpha component is a flavoprotein, the beta component is a hemoprotein. The cofactor is siroheme. [4Fe-4S] cluster serves as cofactor.

It catalyses the reaction hydrogen sulfide + 3 NADP(+) + 3 H2O = sulfite + 3 NADPH + 4 H(+). It functions in the pathway sulfur metabolism; hydrogen sulfide biosynthesis; hydrogen sulfide from sulfite (NADPH route): step 1/1. Functionally, component of the sulfite reductase complex that catalyzes the 6-electron reduction of sulfite to sulfide. This is one of several activities required for the biosynthesis of L-cysteine from sulfate. The sequence is that of Sulfite reductase [NADPH] hemoprotein beta-component from Pectobacterium atrosepticum (strain SCRI 1043 / ATCC BAA-672) (Erwinia carotovora subsp. atroseptica).